The sequence spans 417 residues: Putative plant UBX domain-containing protein 14 (417 aa).

The UBX domain maps to 335 to 415 (DRSVVCSICV…GIANSMISVT (81 aa)).

This chain is Putative plant UBX domain-containing protein 14, found in Arabidopsis thaliana (Mouse-ear cress).